A 482-amino-acid chain; its full sequence is MAAVFDLDLETEEGSEGEGEPELSPADACPLAELRAAGLEPVGHYEEVELTETSVNVGPERIGPHCFELLRVLGKGGYGKVFQVRKVQGTNLGKIYAMKVLRKAKIVRNAKDTAHTRAERNILESVKHPFIVELAYAFQTGGKLYLILECLSGGELFTHLEREGIFLEDTACFYLAEITLALGHLHSQGIIYRDLKPENIMLSSQGHIKLTDFGLCKESIHEGAVTHTFCGTIEYMAPEILVRSGHNRAVDWWSLGALMYDMLTGSPPFTAENRKKTMDKIIRGKLALPPYLTPDARDLVKKFLKRNPSQRIGGGPGDAADVQRHPFFRHMNWDDLLAWRVDPPFRPCLQSEEDVSQFDTRFTRQTPVDSPDDTALSESANQAFLGFTYVAPSVLDSIKEGFSFQPKLRSPRRLNSSPRAPVSPLKFSPFEGFRPSPSLPEPTELPLPPLLPPPPPSTTAPLPIRPPSGTKKSKRGRGRPGR.

Positions 1-26 (MAAVFDLDLETEEGSEGEGEPELSPA) are disordered. Residues 7-21 (LDLETEEGSEGEGEP) are compositionally biased toward acidic residues. Ser15 is subject to Phosphoserine. One can recognise a Protein kinase domain in the interval 67–328 (FELLRVLGKG…AADVQRHPFF (262 aa)). Residues 73-81 (LGKGGYGKV) and Lys99 contribute to the ATP site. The active-site Proton acceptor is Asp194. The AGC-kinase C-terminal domain maps to 329-399 (RHMNWDDLLA…VAPSVLDSIK (71 aa)). The interval 407–482 (KLRSPRRLNS…SKRGRGRPGR (76 aa)) is disordered. Phosphoserine occurs at positions 417 and 423. Positions 437–466 (PSLPEPTELPLPPLLPPPPPSTTAPLPIRP) are enriched in pro residues. The Nuclear localization signal motif lies at 471-477 (KKSKRGR). Residues 471-482 (KKSKRGRGRPGR) show a composition bias toward basic residues. A Phosphoserine; by PKC modification is found at Ser473.

It belongs to the protein kinase superfamily. AGC Ser/Thr protein kinase family. S6 kinase subfamily. Post-translationally, phosphorylated and activated by MTOR. Phosphorylation by PKC within the NLS in response to mitogenic stimuli causes cytoplasmic retention.

It is found in the cytoplasm. It localises to the nucleus. The catalysed reaction is L-seryl-[protein] + ATP = O-phospho-L-seryl-[protein] + ADP + H(+). The enzyme catalyses L-threonyl-[protein] + ATP = O-phospho-L-threonyl-[protein] + ADP + H(+). Its function is as follows. Phosphorylates specifically ribosomal protein S6. Seems to act downstream of mTOR signaling in response to growth factors and nutrients to promote cell proliferation, cell growth and cell cycle progression in an alternative pathway regulated by MEAK7. This Homo sapiens (Human) protein is Ribosomal protein S6 kinase beta-2 (RPS6KB2).